Here is a 311-residue protein sequence, read N- to C-terminus: Taste receptor type 2 member 9 (311 aa).

The Extracellular segment spans residues 1-9; it reads MPSTIEAIY. The chain crosses the membrane as a helical span at residues 10–32; it reads IILIAGELTIGIWGNGFIVLVNC. The Cytoplasmic segment spans residues 33 to 52; it reads IDWLKRRDVSLIDIILISLA. Residues 53 to 72 form a helical membrane-spanning segment; the sequence is ISRICLLCVISLDGFFILLF. Residues 73–86 are Extracellular-facing; the sequence is PGTYDINVLESIMD. The chain crosses the membrane as a helical span at residues 87–109; it reads AVWTFANNSSLWFTSCLSIFYLL. At 110-128 the chain is on the cytoplasmic side; sequence KIANISHPFFFWLKLKINK. The chain crosses the membrane as a helical span at residues 129-146; it reads VILAILLGSFLISLIISF. Residues 147 to 179 are Extracellular-facing; the sequence is PINGXWYHLFKVSHEENITWAFKVSTIPGAFKQ. A glycan (N-linked (GlcNAc...) asparagine) is linked at asparagine 163. A helical membrane pass occupies residues 180-202; that stretch reads LTLNLGAMVPFMLCLISFFLLLF. The Cytoplasmic portion of the chain corresponds to 203-233; the sequence is SLVRHTKQIQLHATGLRDPSTEAHMRAIKAV. Residues 234 to 256 traverse the membrane as a helical segment; the sequence is IIFLLLLIVYYPVFLVMTSSTLI. Over 257-260 the chain is Extracellular; the sequence is PQGK. Residues 261-283 traverse the membrane as a helical segment; the sequence is LVLMIGDIVTVIFPSSHSFILIM. The Cytoplasmic segment spans residues 284–311; it reads GNSKLREAFLKMLRFVKGFLRRRKPFGP.

Belongs to the G-protein coupled receptor T2R family.

It is found in the membrane. Its function is as follows. Gustducin-coupled receptor implicated in the perception of bitter compounds in the oral cavity and the gastrointestinal tract. Signals through PLCB2 and the calcium-regulated cation channel TRPM5. The chain is Taste receptor type 2 member 9 (TAS2R9) from Papio hamadryas (Hamadryas baboon).